The following is a 163-amino-acid chain: MAKESSFDIVSKIELPEVTNAINIALKEIQNRYDFKGSKSDIKLEKEELVLISDDEFKLEQVKDVLISKLIKRNVPIKNLNYGKVENAAGNTVRQRATLQQGIDKDNAKKINSIIKDLKLKVKTQVQDDQVRVTGKSRDDLQAVIAAIRSADLPIDVQFINYR.

This sequence belongs to the YajQ family.

Nucleotide-binding protein. The sequence is that of Nucleotide-binding protein Bcer98_0876 from Bacillus cytotoxicus (strain DSM 22905 / CIP 110041 / 391-98 / NVH 391-98).